The chain runs to 706 residues: MAAKSKKPLPSVDQLTKAQAKVEHKRLALEIAMHDERYYQKDAPTVSDAAYDSLRQRLNAVEARFPELVTTDSPSQKVGAQPSRAFAKIRHAVPMLSLGNAFSDEEVAEFVARVRRFLNLGADEPLAVVAEPKIDGLSLSLRYENGELVNAATRGDGFEGEDVTANVRTIKDVPHKLKGKNIPAVCEVRGEVYMLREDFLTLNKKQADSGDTIFANPRNSAAGSLRQKNVAITASRPLKFFAYAWGEMSAMPATTQFEMVKWFEKAGFAVNPRMILCRDVEALLRYYREIETERAQLSYDIDGVVYKVDRLDWQTRLGFVSRSPRWAIAHKFAAEQATTVLEKIDIQVGRTGALTPVARLAAVTVGGVVVQNATLHNEDEIARKDIREGDTVVIQRAGDVIPQVVSVVTDKRPKHAKPYSFPHVCPVCGSHAVREEGEAVRRCTGALICPAQAVERLKHFVSRLAFDIEGLGDKQIHEFYDAKLIMHPVDIFTLAKRDAHATDKLKDREGYGDVSVRNLFAAIDARRRIELNRLIFALGIRHVGEGNAKLLARHYGTIENFRAAMAEAAAAQTEEGNPSEAYADLNAIGGVGDIVADAVVEFFAEERNVKALNELLHEIEVLPAEQVRADSAVAGKTVVFTGSLTKFTREEAKAQAERLGAKVSGSVSKKTDYVVAGEEAGSKLTKARELGVAVLTEDEWLKLIEG.

NAD(+) is bound by residues 48-52 (DAAYD), 97-98 (SL), and glutamate 131. Residue lysine 133 is the N6-AMP-lysine intermediate of the active site. Positions 154, 191, 307, and 331 each coordinate NAD(+). Zn(2+)-binding residues include cysteine 425, cysteine 428, cysteine 443, and cysteine 449. Residues 628–706 (RADSAVAGKT…EDEWLKLIEG (79 aa)) form the BRCT domain.

This sequence belongs to the NAD-dependent DNA ligase family. LigA subfamily. Requires Mg(2+) as cofactor. It depends on Mn(2+) as a cofactor.

The catalysed reaction is NAD(+) + (deoxyribonucleotide)n-3'-hydroxyl + 5'-phospho-(deoxyribonucleotide)m = (deoxyribonucleotide)n+m + AMP + beta-nicotinamide D-nucleotide.. Its function is as follows. DNA ligase that catalyzes the formation of phosphodiester linkages between 5'-phosphoryl and 3'-hydroxyl groups in double-stranded DNA using NAD as a coenzyme and as the energy source for the reaction. It is essential for DNA replication and repair of damaged DNA. The polypeptide is DNA ligase (Afipia carboxidovorans (strain ATCC 49405 / DSM 1227 / KCTC 32145 / OM5) (Oligotropha carboxidovorans)).